A 388-amino-acid polypeptide reads, in one-letter code: Deoxyguanosinetriphosphate triphosphohydrolase-like protein (388 aa).

Residues 24–44 (HSAQTRGRVHAEPPSTSRTEF) are disordered. The HD domain occupies 78-209 (RLTHSLEVAQ…ANLADEVAYN (132 aa)).

This sequence belongs to the dGTPase family. Type 2 subfamily.

The polypeptide is Deoxyguanosinetriphosphate triphosphohydrolase-like protein (Ralstonia pickettii (strain 12J)).